Here is a 202-residue protein sequence, read N- to C-terminus: Cytochrome c biogenesis ATP-binding export protein CcmA (202 aa).

The region spanning 3-200 (LAAENLSGER…EGTQELKMGA (198 aa)) is the ABC transporter domain. ATP is bound at residue 35-42 (GPNGAGKS).

This sequence belongs to the ABC transporter superfamily. CcmA exporter (TC 3.A.1.107) family. The complex is composed of two ATP-binding proteins (CcmA) and two transmembrane proteins (CcmB).

It is found in the cell inner membrane. The enzyme catalyses heme b(in) + ATP + H2O = heme b(out) + ADP + phosphate + H(+). In terms of biological role, part of the ABC transporter complex CcmAB involved in the biogenesis of c-type cytochromes; once thought to export heme, this seems not to be the case, but its exact role is uncertain. Responsible for energy coupling to the transport system. The protein is Cytochrome c biogenesis ATP-binding export protein CcmA of Chelativorans sp. (strain BNC1).